Consider the following 652-residue polypeptide: Carboxypeptidase S1 homolog A (652 aa).

The signal sequence occupies residues 1–19 (MRFAASIAVALPVIHAASA). A disulfide bridge links cysteine 50 with cysteine 121. N-linked (GlcNAc...) asparagine glycosylation is found at asparagine 77, asparagine 132, asparagine 161, asparagine 168, asparagine 184, and asparagine 202. The active site involves serine 238. 4 N-linked (GlcNAc...) asparagine glycosylation sites follow: asparagine 260, asparagine 299, asparagine 347, and asparagine 410. Disulfide bonds link cysteine 325-cysteine 361 and cysteine 332-cysteine 354. Residue aspartate 458 is part of the active site. Cysteine 461 contributes to the substrate binding site. Residues asparagine 474, asparagine 492, and asparagine 505 are each glycosylated (N-linked (GlcNAc...) asparagine). Residue histidine 516 is part of the active site. Glutamate 517 is a binding site for substrate. The interval 608-627 (AASKGNPPPTTTSSPTAAPT) is disordered. The segment covering 618–627 (TTSSPTAAPT) has biased composition (low complexity). Glycine 629 is lipidated: GPI-anchor amidated glycine. A propeptide spans 630-652 (SAMLKAPVAMLAISALTVLAFFL) (removed in mature form).

This sequence belongs to the peptidase S10 family.

Its subcellular location is the cell membrane. The catalysed reaction is Preferential release of a C-terminal arginine or lysine residue.. Its function is as follows. Extracellular serine carboxypeptidase that contributes to pathogenicity. The sequence is that of Carboxypeptidase S1 homolog A (SCPA) from Trichophyton rubrum (Athlete's foot fungus).